The chain runs to 154 residues: MKLLVLCIFAMMATLAMSRSWHYVEPKFLNKAFEVALKVQIIAGFDRGLVKWLRVHGRTLSTVQKKALYFVNRRYMQTHWANYMLWINKKIDALGRTPVVGDYTRLGAEIGRRIDMAYFYDFLKDKNMIPKYLPYMEEINRMRPADVPVKYMGK.

An N-terminal signal peptide occupies residues 1 to 18 (MKLLVLCIFAMMATLAMS).

Monomer. Homodimer. Molecules associate into dimers and then rapidly dissociate again. Interacts (as a monomer) with the egg vitelline layer protein VERL (via VERL repeats); each VERL chain can bind multiple copies of lysin. Sperm (at protein level).

It localises to the cytoplasmic vesicle. Its subcellular location is the secretory vesicle. The protein localises to the acrosome lumen. In terms of biological role, creates a 3 um hole in the egg vitelline layer through which the sperm passes. Does not have enzyme activity. Species-specific interaction between the sperm protein lysin and the egg protein VERL exposes a basic surface on lysin that may dissociate the egg vitelline layer via electrostatic repulsion. Plays a role in ensuring species-specific fertilization. The chain is Egg-lysin from Haliotis rufescens (California red abalone).